The sequence spans 299 residues: Inosose dehydratase (299 aa).

It belongs to the IolE/MocC family. The cofactor is glutathione. Co(2+) serves as cofactor. It depends on Mn(2+) as a cofactor.

It catalyses the reaction scyllo-inosose = 3D-3,5/4-trihydroxycyclohexane-1,2-dione + H2O. Functionally, catalyzes the dehydration of inosose (2-keto-myo-inositol, 2KMI or 2,4,6/3,5-pentahydroxycyclohexanone) to 3D-(3,5/4)-trihydroxycyclohexane-1,2-dione (D-2,3-diketo-4-deoxy-epi-inositol). The sequence is that of Inosose dehydratase from Klebsiella pneumoniae subsp. pneumoniae (strain ATCC 700721 / MGH 78578).